The primary structure comprises 589 residues: Probable arginine--tRNA ligase, cytoplasmic (589 aa).

Residues S121–N123, H132, Y332, D336, and Q360 each bind L-arginine. The 'HIGH' region motif lies at S121 to H132. An interaction with tRNA region spans residues D469–S483.

Belongs to the class-I aminoacyl-tRNA synthetase family.

It localises to the cytoplasm. The protein localises to the cytosol. It catalyses the reaction tRNA(Arg) + L-arginine + ATP = L-arginyl-tRNA(Arg) + AMP + diphosphate. Forms part of a macromolecular complex that catalyzes the attachment of specific amino acids to cognate tRNAs during protein synthesis. This Dictyostelium discoideum (Social amoeba) protein is Probable arginine--tRNA ligase, cytoplasmic (argS1).